A 395-amino-acid polypeptide reads, in one-letter code: Enoyl-[acyl-carrier-protein] reductase [NADH] (395 aa).

Residues 48–53 (GASTGY), 74–75 (FE), 111–112 (DA), and 139–140 (LA) each bind NAD(+). Tyr-225 lines the substrate pocket. Tyr-235 functions as the Proton donor in the catalytic mechanism. Residues Lys-244 and 273-275 (LVT) contribute to the NAD(+) site.

It belongs to the TER reductase family. In terms of assembly, monomer.

The catalysed reaction is a 2,3-saturated acyl-[ACP] + NAD(+) = a (2E)-enoyl-[ACP] + NADH + H(+). It functions in the pathway lipid metabolism; fatty acid biosynthesis. Its function is as follows. Involved in the final reduction of the elongation cycle of fatty acid synthesis (FAS II). Catalyzes the reduction of a carbon-carbon double bond in an enoyl moiety that is covalently linked to an acyl carrier protein (ACP). This Saccharophagus degradans (strain 2-40 / ATCC 43961 / DSM 17024) protein is Enoyl-[acyl-carrier-protein] reductase [NADH].